Here is a 240-residue protein sequence, read N- to C-terminus: Ribosomal RNA large subunit methyltransferase E (240 aa).

Residues 1–20 are compositionally biased toward gly residues; that stretch reads MSKAGGNKGGSRTGGRGGAG. A disordered region spans residues 1-40; it reads MSKAGGNKGGSRTGGRGGAGSSNLHVRVKKKAGTTKESSR. The S-adenosyl-L-methionine site is built by glycine 92, tryptophan 94, aspartate 115, aspartate 131, and aspartate 155. Catalysis depends on lysine 195, which acts as the Proton acceptor.

It belongs to the class I-like SAM-binding methyltransferase superfamily. RNA methyltransferase RlmE family.

The protein resides in the cytoplasm. The catalysed reaction is uridine(2552) in 23S rRNA + S-adenosyl-L-methionine = 2'-O-methyluridine(2552) in 23S rRNA + S-adenosyl-L-homocysteine + H(+). In terms of biological role, specifically methylates the uridine in position 2552 of 23S rRNA at the 2'-O position of the ribose in the fully assembled 50S ribosomal subunit. This chain is Ribosomal RNA large subunit methyltransferase E, found in Brucella ovis (strain ATCC 25840 / 63/290 / NCTC 10512).